Here is a 349-residue protein sequence, read N- to C-terminus: Nuclear distribution protein nudE homolog 1 (349 aa).

Residues 23 to 189 are a coiled coil; that stretch reads AMKYKTCSEE…ELAVQQKQEK (167 aa). The segment at 182–201 is disordered; it reads AVQQKQEKPKSNMGSPETER.

This sequence belongs to the nudE family. As to quaternary structure, self-associates. Interacts with pafah1b1. In terms of processing, phosphorylated in mitosis.

It localises to the cytoplasm. The protein localises to the cytoskeleton. It is found in the microtubule organizing center. The protein resides in the centrosome. Its subcellular location is the spindle. It localises to the chromosome. The protein localises to the centromere. It is found in the kinetochore. The protein resides in the cleavage furrow. Its subcellular location is the cytoplasmic vesicle membrane. In terms of biological role, required for centrosome duplication and formation and function of the mitotic spindle. The sequence is that of Nuclear distribution protein nudE homolog 1 (nde1) from Xenopus tropicalis (Western clawed frog).